The primary structure comprises 493 residues: Gamma-aminobutyric acid receptor subunit alpha-3 (493 aa).

The N-terminal stretch at 1 to 28 is a signal peptide; that stretch reads MITTQMWHFYVTRVGLLLLISILPGTTG. Residues 27–54 are disordered; that stretch reads TGQGESRRQEPGDFVKQDIGGLSPKHAP. At 29–276 the chain is on the extracellular side; it reads QGESRRQEPG…THFHLKRKIG (248 aa). Residues 31-42 are compositionally biased toward basic and acidic residues; sequence ESRRQEPGDFVK. An N-linked (GlcNAc...) asparagine glycan is attached at asparagine 63. Arginine 119 is a 4-aminobutanoate binding site. Residues asparagine 163 and asparagine 176 are each glycosylated (N-linked (GlcNAc...) asparagine). A 4-aminobutanoate-binding site is contributed by threonine 182. A disulfide bridge links cysteine 191 with cysteine 205. Asparagine 228 is a glycosylation site (N-linked (GlcNAc...) asparagine). 3 helical membrane passes run 277–298, 304–325, and 338–359; these read YFVIQTYLPCIMTVILSQVSFW, VPARTVFGVTTVLTMTTLSISA, and MDWFIAVCYAFVFSALIEFATV. At 360–458 the chain is on the cytoplasmic side; sequence NYFTKRSWAW…TYNSVSKVDK (99 aa). Serine 427 is modified (phosphoserine). Threonine 428 carries the post-translational modification Phosphothreonine. Serine 434 and serine 443 each carry phosphoserine. A helical membrane pass occupies residues 459–480; sequence ISRIIFPVLFAIFNLVYWATYV.

It belongs to the ligand-gated ion channel (TC 1.A.9) family. Gamma-aminobutyric acid receptor (TC 1.A.9.5) subfamily. GABRA3 sub-subfamily. Heteropentamer, formed by a combination of alpha (GABRA1-6), beta (GABRB1-3), gamma (GABRG1-3), delta (GABRD), epsilon (GABRE), rho (GABRR1-3), pi (GABRP) and theta (GABRQ) chains, each subunit exhibiting distinct physiological and pharmacological properties. Binds UBQLN1. Interacts with GPHN. As to expression, expressed in most brain regions. Expressed in lungs, in alveolar epithelium.

The protein resides in the postsynaptic cell membrane. Its subcellular location is the cell membrane. The catalysed reaction is chloride(in) = chloride(out). Alpha subunit of the heteropentameric ligand-gated chloride channel gated by gamma-aminobutyric acid (GABA), a major inhibitory neurotransmitter in the brain. GABA-gated chloride channels, also named GABA(A) receptors (GABAAR), consist of five subunits arranged around a central pore and contain GABA active binding site(s) located at the alpha and beta subunit interface(s). When activated by GABA, GABAARs selectively allow the flow of chloride anions across the cell membrane down their electrochemical gradient. Chloride influx into the postsynaptic neuron following GABAAR opening decreases the neuron ability to generate a new action potential, thereby reducing nerve transmission. The chain is Gamma-aminobutyric acid receptor subunit alpha-3 from Rattus norvegicus (Rat).